Here is a 2531-residue protein sequence, read N- to C-terminus: Highly reducing polyketide synthase gloL (2531 aa).

One can recognise a Ketosynthase family 3 (KS3) domain in the interval 15–435 (YEPLAIVGMG…GANAHVILDS (421 aa)). Residues Cys187, His322, and His358 each act as for beta-ketoacyl synthase activity in the active site. Residues 449–525 (TNGLSVNGHS…GHSVNGHSKP (77 aa)) form a disordered region. Over residues 453 to 503 (SVNGHSINGNSVNGHSVNGHSTNGHSINGNSVNGHSVNGNSVNGHSTNGHS) the composition is skewed to low complexity. A compositionally biased stretch (polar residues) spans 505–521 (NGHSANGNSINGHSVNG). Residues 602–909 (MVFTGQGAQW…VTALERGKDC (308 aa)) form a malonyl-CoA:ACP transacylase (MAT) domain region. Positions 971-1099 (HEILGSRTVE…GQIRSGTDNP (129 aa)) are N-terminal hotdog fold. Residues 971 to 1251 (HEILGSRTVE…GGQFSPIEED (281 aa)) form a dehydratase (DH) domain region. The 284-residue stretch at 971–1254 (HEILGSRTVE…FSPIEEDSSD (284 aa)) folds into the PKS/mFAS DH domain. His1003 serves as the catalytic Proton acceptor; for dehydratase activity. Residues 1109–1254 (DHPRSVPSPY…FSPIEEDSSD (146 aa)) form a C-terminal hotdog fold region. The active-site Proton donor; for dehydratase activity is Asp1169. The methyltransferase (CMet) domain stretch occupies residues 1419 to 1597 (DFFTAAGHSK…FSGCDATVYD (179 aa)). The tract at residues 1806 to 2114 (GLLQTLRWVP…KGSHIGKIVV (309 aa)) is enoyl reductase (ER) (ER) domain. Residues 2139–2312 (GYLLVGGLGG…ASVVDIGVMG (174 aa)) form a ketoreductase (KR) domain region. The Carrier domain occupies 2413-2505 (MSSVETDSSI…ALGLLTIEGL (93 aa)). An O-(pantetheine 4'-phosphoryl)serine modification is found at Ser2464.

It participates in mycotoxin biosynthesis. Functionally, highly reducing polyketide synthase; part of the gene cluster that mediates the biosynthesis of pneumocandins, lipohexapeptides of the echinocandin family that prevent fungal cell wall formation by non-competitive inhibition of beta-1,3-glucan synthase. The 10,12-dimethylmyristoyl side chain is synthesized by the reducing polyketide synthase gloL/GLPKS4. The thioesterase gloN/GLHYD exclusively interacts with gloL/GLPKS4 to maintain turnover of the polyketide side chain. The 10R,12S-dimethylmyristic acid is then transferred to the first thiolation domain of the nonribosomal peptide synthetase gloA/GLNRPS4 by the acyl-AMP ligase gloD/GLligase, followed by its acylation to L-ornithine to trigger elongation of the cyclic hexapeptide. L-ornithine, 4R-hydroxyl-L-proline (generated from L-proline by the dioxygenase gloF/GLOXY2), 3S-hydroxyl-L-homotyrosine (generated by gloG/GLHtyB, gloH/GLHtyA, gloI/GLHtyC, gloJ/GLHtyD and hydroxylated at C-3 by the dioxygenase gloM/GLOXY1), 3R-hydroxyl-L-glutamine (generated from L-glutamine probably by the dioxygenase gloE/GLOXY3) and 3S-hydroxyl-L-proline (generated from L-proline by the dioxygenase gloF/GLOXY2 to yield pneumocandin B0), or 3S-hydroxyl-4S-methyl-L-proline (generated from L-leucine by the dioxygenase gloC/GLOXY4 to yield pneumocandin A0) are sequentially added to the growing chain. The last C domain of gloA/GLNRPS4 is proposed to be responsible for cyclization by condensation to form the peptide bond between L-ornithine and 3S-hydroxyl-4S-methyl-L-proline (for pneumocandin A0) or 3S-hydroxyl-L-proline (for pneumocandin B0). Finally, the subsequent C-4 hydroxylation of 3S-hydroxyl-L-homotyrosine and L-ornithine dihydroxylation at C-4 and C-5 are performed by the cytochrome P450 monooxygenases gloP/GLP450-1 and gloO/GLP450-2, respectively. The protein is Highly reducing polyketide synthase gloL of Glarea lozoyensis (strain ATCC 20868 / MF5171).